A 385-amino-acid chain; its full sequence is uncharacterized protein (385 aa).

It belongs to the mycobacterial PPE family.

This is an uncharacterized protein from Mycobacterium tuberculosis (strain CDC 1551 / Oshkosh).